The primary structure comprises 151 residues: Differentiation-associated protein 2 (151 aa).

Residues 1 to 22 form the signal peptide; the sequence is MKQIIRLITTLLLLSLIGITCA.

The protein localises to the endoplasmic reticulum. It localises to the vacuole. Its function is as follows. Has an essential role in the initiation of differentiation. Also required for cAMP signaling. The sequence is that of Differentiation-associated protein 2 (dia2) from Dictyostelium discoideum (Social amoeba).